The chain runs to 255 residues: Urease accessory protein UreD 1 (255 aa).

The protein belongs to the UreD family. In terms of assembly, ureD, UreF and UreG form a complex that acts as a GTP-hydrolysis-dependent molecular chaperone, activating the urease apoprotein by helping to assemble the nickel containing metallocenter of UreC. The UreE protein probably delivers the nickel.

The protein localises to the cytoplasm. Functionally, required for maturation of urease via the functional incorporation of the urease nickel metallocenter. The polypeptide is Urease accessory protein UreD 1 (Streptomyces griseus subsp. griseus (strain JCM 4626 / CBS 651.72 / NBRC 13350 / KCC S-0626 / ISP 5235)).